The chain runs to 120 residues: NAD(P)H-quinone oxidoreductase subunit 3, chloroplastic (120 aa).

3 consecutive transmembrane segments (helical) span residues 9-29 (IFWA…LISG), 64-84 (MFAL…PWAM), and 88-108 (VLGV…IVGS).

The protein belongs to the complex I subunit 3 family. In terms of assembly, NDH is composed of at least 16 different subunits, 5 of which are encoded in the nucleus.

It localises to the plastid. The protein localises to the chloroplast thylakoid membrane. It catalyses the reaction a plastoquinone + NADH + (n+1) H(+)(in) = a plastoquinol + NAD(+) + n H(+)(out). It carries out the reaction a plastoquinone + NADPH + (n+1) H(+)(in) = a plastoquinol + NADP(+) + n H(+)(out). Its function is as follows. NDH shuttles electrons from NAD(P)H:plastoquinone, via FMN and iron-sulfur (Fe-S) centers, to quinones in the photosynthetic chain and possibly in a chloroplast respiratory chain. The immediate electron acceptor for the enzyme in this species is believed to be plastoquinone. Couples the redox reaction to proton translocation, and thus conserves the redox energy in a proton gradient. The sequence is that of NAD(P)H-quinone oxidoreductase subunit 3, chloroplastic from Gossypium barbadense (Sea Island cotton).